We begin with the raw amino-acid sequence, 60 residues long: Large ribosomal subunit protein uL30 (60 aa).

This sequence belongs to the universal ribosomal protein uL30 family. In terms of assembly, part of the 50S ribosomal subunit.

The protein is Large ribosomal subunit protein uL30 of Cupriavidus metallidurans (strain ATCC 43123 / DSM 2839 / NBRC 102507 / CH34) (Ralstonia metallidurans).